Reading from the N-terminus, the 936-residue chain is MDMPTPSNRAGCNGNTGGTMGPSDDPYGAAAMNLDCYSEIYSPSVADQLFSLLNDPAAHRMFAMWPSMGSSPCAAGTSEDMPLDAYSGLGEAVEEPSQIMSVNPTEAEKTGKSSGELGSDDGAHQGSSMVPRSVVGSSLADRMLMALSLFRESLGSGALAQVWMPVEQEGHVVLSTCEQPFLLDQVLAGYREVSRHFVFSAKEEPGLQPGLPGRVFISGVPEWTSSVLYYNRPEYLRMEHALHHEIRGSLAMPIYDPSKDSCCAVFELVTRKEKPDFSAEMDNVCNALQAVNLKATKGSSNQKFYTENQKFAFTEILDVLRAICHAHMLPLALTWVPTSNGIDGGYVVGKDGASFSQSGKTIIRIHESACYVNDGKMQGFLQACARRHLEKGQGIAGRALKSNLPFFSPDIREYSIEDYPLAHHARKFSLHAAVAIRLRSTYTGNDDYILEFFLPVSCKGSGEQQMLLNNLSSTMQRICKSLRTVYEAEVDNVNAGTAAVFRKNNESCLPTGHTESSSHGDQSITGASFEDTSLANKPGVMEPELAEQVQPSSIGHAEKKRSTAEKNISLDVLRKYFSGSLKDAAKSLGVCPTTLKRICRHHGISRWPSRKINKVNRSLKKIQTVINSVHGVDRSLQYDPATGSLVPVVSLPEKLTFPSCDGLPTPSVGKTVEENSDLKSEEGCSLPDGSQRQSCQLQISDVKKSNEDEFHIGSGNSDFYGANATAKSNSEVTQGPLCPTGAFSALHLKGTDCTNPSSSLRPSSESTRNQIVGRNSPSIQQEDLDMLDNHEAEDKDHMHPSTSGMTDSSSGSASSHPTFKQNTRSALKDAASPALTVKATYNGDTVRFKFLPSMGWYHLLEEIAKRFKLPTGAYQLKYKDDEDEWVILANDSDLQECVDVLDSIGSRIVKLQVRDLPCIVSSSGSSTCLQLAAHSS.

Residues 99-130 (IMSVNPTEAEKTGKSSGELGSDDGAHQGSSMV) are disordered. Residues 550-635 (QPSSIGHAEK…INSVHGVDRS (86 aa)) enclose the RWP-RK domain. 3 disordered regions span residues 666-697 (PSVG…SCQL), 753-782 (CTNP…IQQE), and 794-827 (DKDH…RSAL). Over residues 671–682 (TVEENSDLKSEE) the composition is skewed to basic and acidic residues. A compositionally biased stretch (polar residues) spans 688-697 (DGSQRQSCQL). Residues 754–769 (TNPSSSLRPSSESTRN) show a composition bias toward low complexity. The span at 770–781 (QIVGRNSPSIQQ) shows a compositional bias: polar residues. Over residues 801-815 (STSGMTDSSSGSASS) the composition is skewed to low complexity. Residues 816–825 (HPTFKQNTRS) are compositionally biased toward polar residues. In terms of domain architecture, PB1 spans 834 to 916 (ALTVKATYNG…RIVKLQVRDL (83 aa)).

The protein resides in the nucleus. Its function is as follows. Probable transcription factor. The sequence is that of Protein NLP2 from Oryza sativa subsp. japonica (Rice).